A 237-amino-acid polypeptide reads, in one-letter code: 7-cyano-7-deazaguanine synthase (237 aa).

Position 14 to 24 (14 to 24 (FSGGQDSATCL)) interacts with ATP. Zn(2+)-binding residues include Cys202, Cys217, Cys220, and Cys223.

It belongs to the QueC family. It depends on Zn(2+) as a cofactor.

The catalysed reaction is 7-carboxy-7-deazaguanine + NH4(+) + ATP = 7-cyano-7-deazaguanine + ADP + phosphate + H2O + H(+). It participates in purine metabolism; 7-cyano-7-deazaguanine biosynthesis. Catalyzes the ATP-dependent conversion of 7-carboxy-7-deazaguanine (CDG) to 7-cyano-7-deazaguanine (preQ(0)). This chain is 7-cyano-7-deazaguanine synthase, found in Rhodopseudomonas palustris (strain ATCC BAA-98 / CGA009).